Here is a 185-residue protein sequence, read N- to C-terminus: Elongation factor P (185 aa).

This sequence belongs to the elongation factor P family.

It localises to the cytoplasm. It participates in protein biosynthesis; polypeptide chain elongation. Its function is as follows. Involved in peptide bond synthesis. Stimulates efficient translation and peptide-bond synthesis on native or reconstituted 70S ribosomes in vitro. Probably functions indirectly by altering the affinity of the ribosome for aminoacyl-tRNA, thus increasing their reactivity as acceptors for peptidyl transferase. The protein is Elongation factor P of Agathobacter rectalis (strain ATCC 33656 / DSM 3377 / JCM 17463 / KCTC 5835 / VPI 0990) (Eubacterium rectale).